The sequence spans 81 residues: Small ribosomal subunit protein bS18 (81 aa).

The protein belongs to the bacterial ribosomal protein bS18 family. Part of the 30S ribosomal subunit. Forms a tight heterodimer with protein bS6.

Functionally, binds as a heterodimer with protein bS6 to the central domain of the 16S rRNA, where it helps stabilize the platform of the 30S subunit. This Chlamydia muridarum (strain MoPn / Nigg) protein is Small ribosomal subunit protein bS18.